Reading from the N-terminus, the 146-residue chain is Hemoglobin subunit beta (146 aa).

In terms of domain architecture, Globin spans 2 to 146 (HWTAEEKQLI…VAHALARKYH (145 aa)). Residues His-63 and His-92 each coordinate heme b.

This sequence belongs to the globin family. In terms of assembly, heterotetramer of two alpha chains and two beta chains. In terms of tissue distribution, red blood cells.

Involved in oxygen transport from the lung to the various peripheral tissues. This Chloephaga melanoptera (Andean goose) protein is Hemoglobin subunit beta (HBB).